Consider the following 416-residue polypeptide: CinA-like protein (416 aa).

It belongs to the CinA family.

The protein is CinA-like protein of Solibacter usitatus (strain Ellin6076).